We begin with the raw amino-acid sequence, 1146 residues long: Activator of SKN7 protein 10 (1146 aa).

The span at 1–15 (MSDYFSSRPSQTLTP) shows a compositional bias: polar residues. Disordered regions lie at residues 1–32 (MSDYFSSRPSQTLTPMGNKPSGGGGGDDASSI) and 171–194 (ITDPFTTAPRGPKKAQPAQKKVGL). S344 carries the phosphoserine modification. The 125-residue stretch at 482-606 (CIKAGYFLKK…DCTLKDASST (125 aa)) folds into the PH domain. A disordered region spans residues 553–575 (NNHHRQASDVHNSSTTTGGTAGA). The segment covering 564–575 (NSSTTTGGTAGA) has biased composition (low complexity). S793 bears the Phosphoserine mark. Position 808 is a phosphothreonine (T808). 2 disordered regions span residues 835–854 (MATSGNTTPSYSSGSRPQSM) and 909–982 (PVNS…TAMR). A compositionally biased stretch (low complexity) spans 912–924 (SPGSSNSESSSGG). Over residues 939 to 950 (YTQRNSEGSSPC) the composition is skewed to polar residues. S944 is subject to Phosphoserine. Residues 958 to 968 (QQQQPLQMQPL) show a composition bias toward low complexity. S969 carries the post-translational modification Phosphoserine. A compositionally biased stretch (polar residues) spans 969-982 (SRTSSSSVNVTAMR). T1017 bears the Phosphothreonine mark. 3 positions are modified to phosphoserine: S1070, S1095, and S1098. Residues 1124-1146 (GIQEDDGDSTNNDTIKLNQSIYS) are disordered. The segment covering 1132 to 1146 (STNNDTIKLNQSIYS) has biased composition (polar residues).

It belongs to the RGC1 family. As to quaternary structure, component of the RNA polymerase II holoenzyme. Interacts with RPO21 and SSN8. In terms of processing, phosphorylated in response to various stresses. stress-induced phosphorylation is partially dependent on HOG1.

The protein localises to the cytoplasm. Positive regulator of FPS1 glycerol channel required for the glycerol efflux. As a component of the RNA polymerase II holoenzyme, is required for SSN8 destruction in response to oxidative stress but not heat shock. Required for cell survival in response to heat shock independent of SSN8. This Saccharomyces cerevisiae (strain ATCC 204508 / S288c) (Baker's yeast) protein is Activator of SKN7 protein 10 (ASK10).